Reading from the N-terminus, the 85-residue chain is Large ribosomal subunit protein bL27 (85 aa).

The interval Met1–Gly22 is disordered.

Belongs to the bacterial ribosomal protein bL27 family.

In Teredinibacter turnerae (strain ATCC 39867 / T7901), this protein is Large ribosomal subunit protein bL27.